Reading from the N-terminus, the 102-residue chain is Small ribosomal subunit protein uS10 (102 aa).

This sequence belongs to the universal ribosomal protein uS10 family. Part of the 30S ribosomal subunit.

Involved in the binding of tRNA to the ribosomes. The sequence is that of Small ribosomal subunit protein uS10 from Thermococcus gammatolerans (strain DSM 15229 / JCM 11827 / EJ3).